The primary structure comprises 194 residues: Imidazoleglycerol-phosphate dehydratase (194 aa).

This sequence belongs to the imidazoleglycerol-phosphate dehydratase family.

It is found in the cytoplasm. It carries out the reaction D-erythro-1-(imidazol-4-yl)glycerol 3-phosphate = 3-(imidazol-4-yl)-2-oxopropyl phosphate + H2O. The protein operates within amino-acid biosynthesis; L-histidine biosynthesis; L-histidine from 5-phospho-alpha-D-ribose 1-diphosphate: step 6/9. The polypeptide is Imidazoleglycerol-phosphate dehydratase (Listeria innocua serovar 6a (strain ATCC BAA-680 / CLIP 11262)).